The following is a 404-amino-acid chain: LL-diaminopimelate aminotransferase (404 aa).

Substrate-binding residues include Tyr-15 and Gly-42. Pyridoxal 5'-phosphate is bound by residues Tyr-72, 108–109, Tyr-132, Asn-188, Tyr-219, and 247–249; these read AK and SFS. Residues Lys-109, Tyr-132, and Asn-188 each contribute to the substrate site. Lys-250 carries the post-translational modification N6-(pyridoxal phosphate)lysine. Residues Arg-258 and Asn-288 each coordinate pyridoxal 5'-phosphate. The substrate site is built by Asn-288 and Arg-384.

It belongs to the class-I pyridoxal-phosphate-dependent aminotransferase family. LL-diaminopimelate aminotransferase subfamily. In terms of assembly, homodimer. It depends on pyridoxal 5'-phosphate as a cofactor.

The catalysed reaction is (2S,6S)-2,6-diaminopimelate + 2-oxoglutarate = (S)-2,3,4,5-tetrahydrodipicolinate + L-glutamate + H2O + H(+). Its pathway is amino-acid biosynthesis; L-lysine biosynthesis via DAP pathway; LL-2,6-diaminopimelate from (S)-tetrahydrodipicolinate (aminotransferase route): step 1/1. Its function is as follows. Involved in the synthesis of meso-diaminopimelate (m-DAP or DL-DAP), required for both lysine and peptidoglycan biosynthesis. Catalyzes the direct conversion of tetrahydrodipicolinate to LL-diaminopimelate. The chain is LL-diaminopimelate aminotransferase from Agathobacter rectalis (strain ATCC 33656 / DSM 3377 / JCM 17463 / KCTC 5835 / VPI 0990) (Eubacterium rectale).